A 423-amino-acid polypeptide reads, in one-letter code: Serine--tRNA ligase (423 aa).

L-serine is bound at residue 231–233 (TAE). 262 to 264 (RSE) contributes to the ATP binding site. Position 285 (Glu-285) interacts with L-serine. 349–352 (EISS) is an ATP binding site. L-serine is bound at residue Ser-384.

This sequence belongs to the class-II aminoacyl-tRNA synthetase family. Type-1 seryl-tRNA synthetase subfamily. In terms of assembly, homodimer. The tRNA molecule binds across the dimer.

The protein localises to the cytoplasm. It catalyses the reaction tRNA(Ser) + L-serine + ATP = L-seryl-tRNA(Ser) + AMP + diphosphate + H(+). The catalysed reaction is tRNA(Sec) + L-serine + ATP = L-seryl-tRNA(Sec) + AMP + diphosphate + H(+). The protein operates within aminoacyl-tRNA biosynthesis; selenocysteinyl-tRNA(Sec) biosynthesis; L-seryl-tRNA(Sec) from L-serine and tRNA(Sec): step 1/1. Its function is as follows. Catalyzes the attachment of serine to tRNA(Ser). Is also able to aminoacylate tRNA(Sec) with serine, to form the misacylated tRNA L-seryl-tRNA(Sec), which will be further converted into selenocysteinyl-tRNA(Sec). This chain is Serine--tRNA ligase, found in Lactococcus lactis subsp. cremoris (strain SK11).